The following is a 308-amino-acid chain: Elongation factor Ts (308 aa).

Residues threonine 80–valine 83 are involved in Mg(2+) ion dislocation from EF-Tu.

The protein belongs to the EF-Ts family.

It is found in the cytoplasm. Functionally, associates with the EF-Tu.GDP complex and induces the exchange of GDP to GTP. It remains bound to the aminoacyl-tRNA.EF-Tu.GTP complex up to the GTP hydrolysis stage on the ribosome. This chain is Elongation factor Ts, found in Erythrobacter litoralis (strain HTCC2594).